Reading from the N-terminus, the 199-residue chain is Large ribosomal subunit protein bL17 (199 aa).

Residues 123-199 (DEANRARRAA…EESEAKDDTK (77 aa)) form a disordered region. The span at 137 to 152 (KADERADEKADEKAEE) shows a compositional bias: basic and acidic residues. The segment covering 153–199 (TVEETTEAPAEESTEAAAEETVEETTEAPAEESTEAAEESEAKDDTK) has biased composition (acidic residues).

It belongs to the bacterial ribosomal protein bL17 family. In terms of assembly, part of the 50S ribosomal subunit. Contacts protein L32.

The sequence is that of Large ribosomal subunit protein bL17 from Mycolicibacterium smegmatis (strain ATCC 700084 / mc(2)155) (Mycobacterium smegmatis).